The following is a 553-amino-acid chain: Probable malate:quinone oxidoreductase (553 aa).

The tract at residues 524–553 (PPPKIDVNTPSQATGTAPARPAKASADMAL) is disordered.

It belongs to the MQO family. It depends on FAD as a cofactor.

The catalysed reaction is (S)-malate + a quinone = a quinol + oxaloacetate. Its pathway is carbohydrate metabolism; tricarboxylic acid cycle; oxaloacetate from (S)-malate (quinone route): step 1/1. This chain is Probable malate:quinone oxidoreductase, found in Burkholderia lata (strain ATCC 17760 / DSM 23089 / LMG 22485 / NCIMB 9086 / R18194 / 383).